The following is a 196-amino-acid chain: ATP-dependent Clp protease proteolytic subunit (196 aa).

The active-site Nucleophile is the Ser-96. The active site involves His-121.

Belongs to the peptidase S14 family. In terms of assembly, fourteen ClpP subunits assemble into 2 heptameric rings which stack back to back to give a disk-like structure with a central cavity, resembling the structure of eukaryotic proteasomes.

It is found in the cytoplasm. It catalyses the reaction Hydrolysis of proteins to small peptides in the presence of ATP and magnesium. alpha-casein is the usual test substrate. In the absence of ATP, only oligopeptides shorter than five residues are hydrolyzed (such as succinyl-Leu-Tyr-|-NHMec, and Leu-Tyr-Leu-|-Tyr-Trp, in which cleavage of the -Tyr-|-Leu- and -Tyr-|-Trp bonds also occurs).. Functionally, cleaves peptides in various proteins in a process that requires ATP hydrolysis. Has a chymotrypsin-like activity. Plays a major role in the degradation of misfolded proteins. The chain is ATP-dependent Clp protease proteolytic subunit from Streptococcus mutans serotype c (strain ATCC 700610 / UA159).